A 122-amino-acid chain; its full sequence is MIRPQTILNVADNSGAKKLMCIRVLGGSYKQSANIGDIIIAVVKQATPNMPLKKSDKVRAVVVRTAQGVQRENGTFIRFDDNAAVVINKDDNPRGTRVFGPVARELRDRKFTKIVSLAPEVL.

This sequence belongs to the universal ribosomal protein uL14 family. Part of the 50S ribosomal subunit.

It localises to the plastid. The protein localises to the chloroplast. Binds to 23S rRNA. The sequence is that of Large ribosomal subunit protein uL14c from Tupiella akineta (Green alga).